The following is a 343-amino-acid chain: DNA-directed RNA polymerase subunit alpha (343 aa).

Residues 1–243 are alpha N-terminal domain (alpha-NTD); sequence MTQEIDEKIP…EQLDIFINFD (243 aa). The interval 261–343 is alpha C-terminal domain (alpha-CTD); it reads ENPYLDKPVE…NAPSDAETEE (83 aa).

It belongs to the RNA polymerase alpha chain family. In terms of assembly, homodimer. The RNAP catalytic core consists of 2 alpha, 1 beta, 1 beta' and 1 omega subunit. When a sigma factor is associated with the core the holoenzyme is formed, which can initiate transcription.

The enzyme catalyses RNA(n) + a ribonucleoside 5'-triphosphate = RNA(n+1) + diphosphate. Its function is as follows. DNA-dependent RNA polymerase catalyzes the transcription of DNA into RNA using the four ribonucleoside triphosphates as substrates. The polypeptide is DNA-directed RNA polymerase subunit alpha (Desulfotalea psychrophila (strain LSv54 / DSM 12343)).